The chain runs to 545 residues: CTP synthase (545 aa).

Residues 1–267 (MTKFIFVTGG…AEQVLNLLQM (267 aa)) form an amidoligase domain region. Position 13 (Ser13) interacts with CTP. Residue Ser13 coordinates UTP. ATP contacts are provided by residues 14–19 (SIGKGI) and Asp71. Mg(2+)-binding residues include Asp71 and Glu141. CTP is bound by residues 148 to 150 (DIE), 188 to 193 (KTKPTQ), and Lys224. Residues 188 to 193 (KTKPTQ) and Lys224 each bind UTP. The 243-residue stretch at 292–534 (EIAIVGKYVQ…IQAAIALSLS (243 aa)) folds into the Glutamine amidotransferase type-1 domain. Gly354 provides a ligand contact to L-glutamine. Residue Cys381 is the Nucleophile; for glutamine hydrolysis of the active site. L-glutamine contacts are provided by residues 382–385 (LGMQ), Glu405, and Arg462. Residues His507 and Glu509 contribute to the active site.

Belongs to the CTP synthase family. As to quaternary structure, homotetramer.

It catalyses the reaction UTP + L-glutamine + ATP + H2O = CTP + L-glutamate + ADP + phosphate + 2 H(+). The enzyme catalyses L-glutamine + H2O = L-glutamate + NH4(+). It carries out the reaction UTP + NH4(+) + ATP = CTP + ADP + phosphate + 2 H(+). The protein operates within pyrimidine metabolism; CTP biosynthesis via de novo pathway; CTP from UDP: step 2/2. Its activity is regulated as follows. Allosterically activated by GTP, when glutamine is the substrate; GTP has no effect on the reaction when ammonia is the substrate. The allosteric effector GTP functions by stabilizing the protein conformation that binds the tetrahedral intermediate(s) formed during glutamine hydrolysis. Inhibited by the product CTP, via allosteric rather than competitive inhibition. Catalyzes the ATP-dependent amination of UTP to CTP with either L-glutamine or ammonia as the source of nitrogen. Regulates intracellular CTP levels through interactions with the four ribonucleotide triphosphates. This is CTP synthase from Nostoc punctiforme (strain ATCC 29133 / PCC 73102).